The chain runs to 155 residues: Small ribosomal subunit protein uS7cz/uS7cy (155 aa).

Belongs to the universal ribosomal protein uS7 family. As to quaternary structure, part of the 30S ribosomal subunit.

It is found in the plastid. Its subcellular location is the chloroplast. Its function is as follows. One of the primary rRNA binding proteins, it binds directly to 16S rRNA where it nucleates assembly of the head domain of the 30S subunit. In Atropa belladonna (Belladonna), this protein is Small ribosomal subunit protein uS7cz/uS7cy (rps7-A).